Reading from the N-terminus, the 718-residue chain is Manganese-exporting P-type ATPase (718 aa).

Residues Gly-11–Ala-78 enclose the HMA domain. The next 6 membrane-spanning stretches (helical) occupy residues His-87–Ala-105, Thr-128–Leu-146, Ala-154–Leu-168, Leu-177–Asp-191, Val-327–Gly-351, and Met-357–Ala-375. Asp-408 serves as the catalytic 4-aspartylphosphate intermediate. Mg(2+)-binding residues include Asp-408, Thr-410, and Asp-610. A run of 2 helical transmembrane segments spans residues Ala-661–Leu-680 and Pro-690–Ser-709.

It belongs to the cation transport ATPase (P-type) (TC 3.A.3) family. Type IB subfamily.

It is found in the cell membrane. The enzyme catalyses Mn(2+)(in) + ATP + H2O = Mn(2+)(out) + ADP + phosphate + H(+). Functionally, high affinity, slow turnover Mn(2+) transporting ATPase. The chain is Manganese-exporting P-type ATPase (ctpC) from Mycobacterium bovis (strain ATCC BAA-935 / AF2122/97).